An 865-amino-acid polypeptide reads, in one-letter code: Carbohydrate-responsive element-binding protein (865 aa).

Disordered regions lie at residues 15–41 (PRVV…AGGL) and 53–77 (MVSS…LADF). Phosphoserine is present on residues Ser-20, Ser-23, and Ser-25. Thr-27 carries the post-translational modification Phosphothreonine. At Ser-196 the chain carries Phosphoserine. Disordered stretches follow at residues 334 to 392 (GILG…TKMP) and 500 to 653 (QPRC…LSRG). Residues 351 to 368 (GMTPLSGNTRLQARNSCS) are compositionally biased toward polar residues. Low complexity predominate over residues 515 to 533 (ASPPTLTSATASPTATATA). Ser-568 bears the Phosphoserine; by AMPK mark. Positions 583–597 (PPIPAPTPPRPPPGP) are enriched in pro residues. Ser-615, Ser-627, and Ser-644 each carry phosphoserine. Residues 662–716 (NRRITHISAEQKRRFNIKLGFDTLHGLVSTLSAQPSLKVSKATTLQKTAEYILML) enclose the bHLH domain. Positions 716 to 737 (LQQERAAMQEEAQQLRDEIEEL) are leucine-zipper.

As to quaternary structure, binds DNA as a heterodimer with TCFL4/MLX. Post-translationally, phosphorylation at Ser-568 by AMPK inactivates the DNA-binding activity.

The protein localises to the nucleus. Functionally, transcriptional repressor. Binds to the canonical and non-canonical E box sequences 5'-CACGTG-3'. This Rattus norvegicus (Rat) protein is Carbohydrate-responsive element-binding protein (Mlxipl).